A 101-amino-acid polypeptide reads, in one-letter code: ATP synthase subunit c (101 aa).

A run of 2 helical transmembrane segments spans residues 31–51 (AFAY…GAGQ) and 81–101 (AISE…IFVG).

It belongs to the ATPase C chain family. In terms of assembly, F-type ATPases have 2 components, F(1) - the catalytic core - and F(0) - the membrane proton channel. F(1) has five subunits: alpha(3), beta(3), gamma(1), delta(1), epsilon(1). F(0) has three main subunits: a(1), b(2) and c(10-14). The alpha and beta chains form an alternating ring which encloses part of the gamma chain. F(1) is attached to F(0) by a central stalk formed by the gamma and epsilon chains, while a peripheral stalk is formed by the delta and b chains.

It localises to the cell membrane. Functionally, f(1)F(0) ATP synthase produces ATP from ADP in the presence of a proton or sodium gradient. F-type ATPases consist of two structural domains, F(1) containing the extramembraneous catalytic core and F(0) containing the membrane proton channel, linked together by a central stalk and a peripheral stalk. During catalysis, ATP synthesis in the catalytic domain of F(1) is coupled via a rotary mechanism of the central stalk subunits to proton translocation. Key component of the F(0) channel; it plays a direct role in translocation across the membrane. A homomeric c-ring of between 10-14 subunits forms the central stalk rotor element with the F(1) delta and epsilon subunits. In Mesomycoplasma hyopneumoniae (strain J / ATCC 25934 / NCTC 10110) (Mycoplasma hyopneumoniae), this protein is ATP synthase subunit c.